A 712-amino-acid chain; its full sequence is Amine oxidase [copper-containing] gamma 1 (712 aa).

An N-terminal signal peptide occupies residues 1–24 (MAEPSFARLFLLFFSFLLIFATYS). Residues Asn-146 and Asn-173 are each glycosylated (N-linked (GlcNAc...) asparagine). Cys-188 and Cys-210 are joined by a disulfide. Substrate is bound at residue 352 to 363 (YMDAGELGLGPT). Catalysis depends on Asp-354, which acts as the Proton acceptor. Cys-373 and Cys-399 are joined by a disulfide. Substrate is bound at residue 439 to 444 (VGNYDY). Residue Tyr-442 is the Schiff-base intermediate with substrate; via topaquinone of the active site. Tyr-442 is subject to 2',4',5'-topaquinone. Cu cation-binding residues include His-499 and His-501. Asp-508, Met-509, and Asp-510 together coordinate Mn(2+). Asn-516 and Asn-617 each carry an N-linked (GlcNAc...) asparagine glycan. Residues Asp-651 and Ile-652 each coordinate Mn(2+). Position 662 (His-662) interacts with Cu cation.

It belongs to the copper/topaquinone oxidase family. Homodimer. It depends on Cu cation as a cofactor. The cofactor is Zn(2+). L-topaquinone serves as cofactor. Mn(2+) is required as a cofactor. Post-translationally, topaquinone (TPQ) is generated by copper-dependent autoxidation of a specific tyrosyl residue. Mostly expressed in roots, stems and flowers, and, at lower levels, in leaves and cotyledons.

Its subcellular location is the secreted. The protein resides in the extracellular space. It localises to the apoplast. The enzyme catalyses a primary methyl amine + O2 + H2O = an aldehyde + H2O2 + NH4(+). The protein operates within amine and polyamine degradation; putrescine degradation. Its function is as follows. Copper amine oxidase that can use putrescine and spermidine as substrates. Required for abscisic acid- (ABA) and polyamine- (PA) and H(2)O(2)-dependent induced nitric oxide (NO) biosynthesis. Involved in ABA signal transduction and in responses to osmotic stress. The polypeptide is Amine oxidase [copper-containing] gamma 1 (Arabidopsis thaliana (Mouse-ear cress)).